The chain runs to 427 residues: Glutamate-1-semialdehyde 2,1-aminomutase 1 (427 aa).

Lysine 267 carries the N6-(pyridoxal phosphate)lysine modification.

This sequence belongs to the class-III pyridoxal-phosphate-dependent aminotransferase family. HemL subfamily. As to quaternary structure, homodimer. Requires pyridoxal 5'-phosphate as cofactor.

It localises to the cytoplasm. It catalyses the reaction (S)-4-amino-5-oxopentanoate = 5-aminolevulinate. It functions in the pathway porphyrin-containing compound metabolism; protoporphyrin-IX biosynthesis; 5-aminolevulinate from L-glutamyl-tRNA(Glu): step 2/2. The protein is Glutamate-1-semialdehyde 2,1-aminomutase 1 of Staphylococcus epidermidis (strain ATCC 35984 / DSM 28319 / BCRC 17069 / CCUG 31568 / BM 3577 / RP62A).